We begin with the raw amino-acid sequence, 196 residues long: uncharacterized protein (196 aa).

Residues 71–87 form a helical membrane-spanning segment; the sequence is YVKLIGTGCYVAILISG.

The protein localises to the membrane. This is an uncharacterized protein from Dictyostelium discoideum (Social amoeba).